Here is a 518-residue protein sequence, read N- to C-terminus: Receptor-interacting serine/threonine-protein kinase 3 (518 aa).

Serine 2 is subject to Phosphoserine. One can recognise a Protein kinase domain in the interval 21–287 (LENQELVGKG…ECLPKTDEVF (267 aa)). 27 to 35 (VGKGGFGTV) provides a ligand contact to ATP. Lysine 42 is covalently cross-linked (Glycyl lysine isopeptide (Lys-Gly) (interchain with G-Cter in ubiquitin)). An ATP-binding site is contributed by lysine 50. The Proton acceptor role is filled by aspartate 142. The residue at position 164 (serine 164) is a Phosphoserine. At threonine 182 the chain carries Phosphothreonine. 2 positions are modified to phosphoserine; by autocatalysis: serine 199 and serine 227. Residue threonine 252 is modified to Phosphothreonine. A Phosphoserine modification is found at serine 299. Threonine 333 is subject to Phosphothreonine. Residues lysine 351 and lysine 363 each participate in a glycyl lysine isopeptide (Lys-Gly) (interchain with G-Cter in ubiquitin) cross-link. Residues 355–443 (EEPPSSVPKK…WSCRTPEPNP (89 aa)) form a disordered region. The segment covering 384–408 (TAGTSSDSMAQPPQTPETSTFRNQM) has biased composition (polar residues). Residue serine 389 is modified to Phosphoserine. A Phosphothreonine modification is found at threonine 401. The RIP homotypic interaction motif (RHIM) signature appears at 450–466 (VNIYNCSGVQVGDNNYL). Residues 476 to 518 (TWGLAPSGKGRGLQHPPPVGSQEGPKDPEAWSRPQGWYNHSGK) form a disordered region. Lysine 518 participates in a covalent cross-link: Glycyl lysine isopeptide (Lys-Gly) (interchain with G-Cter in ubiquitin).

This sequence belongs to the protein kinase superfamily. TKL Ser/Thr protein kinase family. In terms of assembly, interacts (via RIP homotypic interaction motif) with RIPK1 (via RIP homotypic interaction motif); this interaction induces RIPK1 phosphorylation and formation of a RIPK1-RIPK3 necrosis-inducing complex. Interacts with MLKL; the interaction is direct and triggers necroptosis. Interacts with ZBP1 (via RIP homotypic interaction motif); interaction with ZBP1 activates RIPK3, triggering necroptosis. Upon TNF-induced necrosis, the RIPK1-RIPK3 dimer further interacts with PGAM5 and MLKL; the formation of this complex leads to PGAM5 phosphorylation and increase in PGAM5 phosphatase activity. Binds TRAF2 and is recruited to the TNFR-1 signaling complex. Interacts with PYGL, GLUL and GLUD1; these interactions result in activation of these metabolic enzymes. Interacts with BIRC2/c-IAP1, BIRC3/c-IAP2 and XIAP/BIRC4. Interacts with ARHGEF2. Interacts with PELI1 (via atypical FHA domain); the phosphorylated form at Thr-182 binds preferentially to PELI1. Interacts with BUB1B, TRAF2 and STUB1. Interacts with CASP6. Component of the AIM2 PANoptosome complex, a multiprotein complex that drives inflammatory cell death (PANoptosis). As to quaternary structure, (Microbial infection) Interacts (via RIP homotypic interaction motif/RHIM) with herpes simplex virus 1/HHV-1 protein RIR1/ICP6 (via RHIM); this interaction may induce heteromeric amyloid assemblies and prevent necroptosis activation. (Microbial infection) Interacts (via RIP homotypic interaction motif/RHIM) with herpes simplex virus 2/HHV-2 protein RIR1/ICP10 (via RHIM); this interaction prevents necroptosis activation. (Microbial infection) Proteolytically cleaved by S.flexneri OspD3 within the RIP homotypic interaction motif (RHIM), leading to its degradation and inhibition of necroptosis. In terms of processing, RIPK1 and RIPK3 undergo reciprocal auto- and trans-phosphorylation. Autophosphorylated following interaction with ZBP1. Phosphorylation of Ser-199 plays a role in the necroptotic function of RIPK3. Autophosphorylates at Ser-227 following activation by ZBP1: phosphorylation at these sites is a hallmark of necroptosis and is required for binding MLKL. Phosphorylation at Thr-182 is important for its kinase activity, interaction with PELI1 and PELI1-mediated 'Lys-48'-linked polyubiquitination and for its ability to mediate TNF-induced necroptosis. Post-translationally, polyubiquitinated with 'Lys-48' and 'Lys-63'-linked chains by BIRC2/c-IAP1 and BIRC3/c-IAP2, leading to activation of NF-kappa-B. Polyubiquitinated with 'Lys-48'-linked chains by PELI1 leading to its subsequent proteasome-dependent degradation. Ubiquitinated by STUB1 leading to its subsequent proteasome-dependent degradation. Deubiquitinated by USP22. Highly expressed in the pancreas. Detected at lower levels in heart, placenta, lung and kidney. As to expression, expression is significantly increased in colon and lung cancers.

It localises to the cytoplasm. Its subcellular location is the cytosol. The protein localises to the nucleus. It catalyses the reaction L-seryl-[protein] + ATP = O-phospho-L-seryl-[protein] + ADP + H(+). The catalysed reaction is L-threonyl-[protein] + ATP = O-phospho-L-threonyl-[protein] + ADP + H(+). Its activity is regulated as follows. Activity is stimulated by ZBP1, which senses double-stranded Z-RNA structures. RIPK3-dependent necroptosis is inhibited by RIPK1: RIPK1 prevents the ZBP1-induced activation of RIPK3 via FADD-mediated recruitment of CASP8, which cleaves RIPK1 and limits TNF-induced necroptosis. Serine/threonine-protein kinase that activates necroptosis and apoptosis, two parallel forms of cell death. Necroptosis, a programmed cell death process in response to death-inducing TNF-alpha family members, is triggered by RIPK3 following activation by ZBP1. Activated RIPK3 forms a necrosis-inducing complex and mediates phosphorylation of MLKL, promoting MLKL localization to the plasma membrane and execution of programmed necrosis characterized by calcium influx and plasma membrane damage. In addition to TNF-induced necroptosis, necroptosis can also take place in the nucleus in response to orthomyxoviruses infection: following ZBP1 activation, which senses double-stranded Z-RNA structures, nuclear RIPK3 catalyzes phosphorylation and activation of MLKL, promoting disruption of the nuclear envelope and leakage of cellular DNA into the cytosol. Also regulates apoptosis: apoptosis depends on RIPK1, FADD and CASP8, and is independent of MLKL and RIPK3 kinase activity. Phosphorylates RIPK1: RIPK1 and RIPK3 undergo reciprocal auto- and trans-phosphorylation. In some cell types, also able to restrict viral replication by promoting cell death-independent responses. In response to Zika virus infection in neurons, promotes a cell death-independent pathway that restricts viral replication: together with ZBP1, promotes a death-independent transcriptional program that modifies the cellular metabolism via up-regulation expression of the enzyme ACOD1/IRG1 and production of the metabolite itaconate. Itaconate inhibits the activity of succinate dehydrogenase, generating a metabolic state in neurons that suppresses replication of viral genomes. RIPK3 binds to and enhances the activity of three metabolic enzymes: GLUL, GLUD1, and PYGL. These metabolic enzymes may eventually stimulate the tricarboxylic acid cycle and oxidative phosphorylation, which could result in enhanced ROS production. Its function is as follows. (Microbial infection) In case of herpes simplex virus 1/HHV-1 infection, forms heteromeric amyloid structures with HHV-1 protein RIR1/ICP6 which may inhibit RIPK3-mediated necroptosis, thereby preventing host cell death pathway and allowing viral evasion. The chain is Receptor-interacting serine/threonine-protein kinase 3 from Homo sapiens (Human).